The sequence spans 172 residues: 3-phenylpropionate/cinnamic acid dioxygenase subunit beta (172 aa).

The protein belongs to the bacterial ring-hydroxylating dioxygenase beta subunit family. This dioxygenase system consists of four proteins: the two subunits of the hydroxylase component (HcaE and HcaF), a ferredoxin (HcaC) and a ferredoxin reductase (HcaD).

The catalysed reaction is 3-phenylpropanoate + NADH + O2 + H(+) = 3-(cis-5,6-dihydroxycyclohexa-1,3-dien-1-yl)propanoate + NAD(+). It catalyses the reaction (E)-cinnamate + NADH + O2 + H(+) = (2E)-3-(cis-5,6-dihydroxycyclohexa-1,3-dien-1-yl)prop-2-enoate + NAD(+). The protein operates within aromatic compound metabolism; 3-phenylpropanoate degradation. In terms of biological role, part of the multicomponent 3-phenylpropionate dioxygenase. Converts 3-phenylpropionic acid (PP) and cinnamic acid (CI) into 3-phenylpropionate-dihydrodiol (PP-dihydrodiol) and cinnamic acid-dihydrodiol (CI-dihydrodiol), respectively. This is 3-phenylpropionate/cinnamic acid dioxygenase subunit beta from Shigella boydii serotype 4 (strain Sb227).